Consider the following 559-residue polypeptide: Sesquiterpene synthase (559 aa).

Residues Asp-312, Asp-316, and Glu-464 each coordinate Mg(2+). A DDXXD motif motif is present at residues 312-316 (DDIYD).

Belongs to the terpene synthase family. Tpsa subfamily. It depends on Mg(2+) as a cofactor. Mn(2+) is required as a cofactor.

Functionally, catalyzes alpha-humulene and delta-cadinene, as well as beta-elemene, the thermal rearrangement product of germacrene A and several other bicyclic sesquiterpenes when incubated with (2E,6E)-farnesyl diphosphate. The polypeptide is Sesquiterpene synthase (Santalum austrocaledonicum (Sandalwood)).